The following is a 111-amino-acid chain: Nucleoid-associated protein PputGB1_3833 (111 aa).

2 disordered regions span residues M1–E25 and E87–F111.

This sequence belongs to the YbaB/EbfC family. Homodimer.

It localises to the cytoplasm. The protein resides in the nucleoid. Its function is as follows. Binds to DNA and alters its conformation. May be involved in regulation of gene expression, nucleoid organization and DNA protection. The polypeptide is Nucleoid-associated protein PputGB1_3833 (Pseudomonas putida (strain GB-1)).